The primary structure comprises 531 residues: Putative aldehyde dehydrogenase family 7 member A1 homolog (531 aa).

264 to 269 (GSSEIG) provides a ligand contact to NAD(+). Residue Glu-286 is the Proton acceptor of the active site. Cys-320 acts as the Nucleophile in catalysis.

Belongs to the aldehyde dehydrogenase family. As to quaternary structure, homotetramer.

The enzyme catalyses an aldehyde + NAD(+) + H2O = a carboxylate + NADH + 2 H(+). In Caenorhabditis elegans, this protein is Putative aldehyde dehydrogenase family 7 member A1 homolog (alh-9).